Here is a 293-residue protein sequence, read N- to C-terminus: ATP synthase gamma chain (293 aa).

This sequence belongs to the ATPase gamma chain family. F-type ATPases have 2 components, CF(1) - the catalytic core - and CF(0) - the membrane proton channel. CF(1) has five subunits: alpha(3), beta(3), gamma(1), delta(1), epsilon(1). CF(0) has three main subunits: a, b and c.

It localises to the cell membrane. In terms of biological role, produces ATP from ADP in the presence of a proton gradient across the membrane. The gamma chain is believed to be important in regulating ATPase activity and the flow of protons through the CF(0) complex. In Streptococcus gordonii (strain Challis / ATCC 35105 / BCRC 15272 / CH1 / DL1 / V288), this protein is ATP synthase gamma chain.